A 395-amino-acid polypeptide reads, in one-letter code: F-box only protein 7 (395 aa).

An F-box domain is found at 19-70 (NHDWSKLCPDILRKIIESLSSLDFYRAKIVCSDWYSVWKTCVKRPLRPWRII).

The sequence is that of F-box only protein 7 (FBX7) from Arabidopsis thaliana (Mouse-ear cress).